The sequence spans 292 residues: AKT-interacting protein (292 aa).

The interval 1–63 is disordered; sequence MNPLWSMSAG…TSPAPAAQST (63 aa). The span at 14-23 shows a compositional bias: basic and acidic residues; the sequence is KRAEGEEKTL. At serine 30 the chain carries Phosphoserine. Residues 74-222 enclose the UBC core domain; it reads YLEYSLLAEF…VVDSVKVCTA (149 aa).

The protein belongs to the ubiquitin-conjugating enzyme family. FTS subfamily. Component of the FTS/Hook/FHIP complex (FHF complex), composed of AKTIP/FTS, FHIP1B, and one or more members of the Hook family of proteins HOOK1, HOOK2, and HOOK3. Interacts directly with HOOK1, HOOK2 and HOOK3. The FHF complex associates with the homotypic vesicular sorting complex (the HOPS complex). Also interacts with AKT1. May interact with FHIP1A. In terms of tissue distribution, ubiquitous. Highest expression in kidney, testis and brain and lowest in spleen and liver.

The protein resides in the cytoplasm. Its subcellular location is the cell membrane. In terms of biological role, component of the FTS/Hook/FHIP complex (FHF complex). The FHF complex may function to promote vesicle trafficking and/or fusion via the homotypic vesicular protein sorting complex (the HOPS complex). Regulates apoptosis by enhancing phosphorylation and activation of AKT1. Increases release of TNFSF6 via the AKT1/GSK3B/NFATC1 signaling cascade. FHF complex promotes the distribution of AP-4 complex to the perinuclear area of the cell. In Mus musculus (Mouse), this protein is AKT-interacting protein (Aktip).